The sequence spans 242 residues: Transcription factor Spi-C (242 aa).

Residues 112–195 (LRLFEYLFES…IRRKLTYQFS (84 aa)) constitute a DNA-binding region (ETS).

The protein belongs to the ETS family. Binds DNA as a monomer. As to expression, expressed in lymphoid tissues, including spleen, bone marrow and thymus. According to PubMed:19037245, highly expressed in red pulp macrophages and, at lower, levels in B-cells, but not in other cells, including, monocytes, dendritic cells and other tissue macrophages. According to PubMed:10464163 expressed in pre- and mature B-cells but not in immature B-cells; according to PubMed:10187812 not expressed in pre- but predominantly in mature B-cells and at lower levels in macrophages.

The protein resides in the nucleus. Its function is as follows. Controls the development of red pulp macrophages required for red blood cells recycling and iron homeostasis. Transcription factor that binds to the PU-box, a purine-rich DNA sequence (5'-GAGGA[AT]-3') that can act as a lymphoid-specific enhancer. Regulates VCAM1 gene expression. The chain is Transcription factor Spi-C (Spic) from Mus musculus (Mouse).